The sequence spans 1928 residues: Lactase/phlorizin hydrolase (1928 aa).

The N-terminal stretch at 1 to 21 (MELPWTALFLSTVLLGLSCQG) is a signal peptide. Positions 22 to 867 (SDWESDRNFI…LPVRADFTSR (846 aa)) are cleaved as a propeptide — XBetaGly. At 22–1883 (SDWESDRNFI…LMLGIAEAQT (1862 aa)) the chain is on the extracellular side. The tract at residues 46-289 (NYPPGKQGSD…FIYTLKLEDC (244 aa)) is glycosyl hydrolase-1 1; Region I. A glycosyl hydrolase-1 2; Region II region spans residues 364–856 (VWAAFANQSR…GFSAKKVKRN (493 aa)). N-linked (GlcNAc...) asparagine glycosylation is found at Asn-370, Asn-514, Asn-824, Asn-936, Asn-948, Asn-991, and Asn-1037. The segment at 904–1367 (RFRDDFLWGV…DLIANNGMPL (464 aa)) is glycosyl hydrolase-1 3; Region III. Phlorizin hydrolase/Glycosylceramidase activity. Catalysis depends on Glu-1067, which acts as the Proton donor; for phlorizin hydrolase/Glycosylceramidase activity. N-linked (GlcNAc...) asparagine glycans are attached at residues Asn-1176 and Asn-1240. Glu-1274 acts as the Nucleophile; for phlorizin hydrolase/Glycosylceramidase activity in catalysis. N-linked (GlcNAc...) asparagine glycans are attached at residues Asn-1281 and Asn-1509. The tract at residues 1374–1847 (LYGEFPKGFI…CNGFPDPAQG (474 aa)) is glycosyl hydrolase-1 4; Region IV. Lactase activity. Glu-1539 (proton donor; for lactase activity) is an active-site residue. Residues Asn-1657 and Asn-1684 are each glycosylated (N-linked (GlcNAc...) asparagine). Glu-1750 serves as the catalytic Nucleophile; for lactase activity. Residues Asn-1762 and Asn-1815 are each glycosylated (N-linked (GlcNAc...) asparagine). A helical transmembrane segment spans residues 1884–1902 (ALYVLFALLLLGACSLAFL). Topologically, residues 1903–1928 (TYNTGRRSKQGNAQPSQHQLSPISSF) are cytoplasmic.

It belongs to the glycosyl hydrolase 1 family. Homodimer. Post-translationally, N-glycosylated. In terms of tissue distribution, intestine.

It localises to the apical cell membrane. It carries out the reaction lactose + H2O = beta-D-galactose + D-glucose. The enzyme catalyses phlorizin + H2O = phloretin + beta-D-glucose. The catalysed reaction is D-cellobiose + H2O = beta-D-glucose + D-glucose. It catalyses the reaction quercetin 4'-O-beta-D-glucoside + H2O = quercetin + beta-D-glucose. It carries out the reaction quercetin 3-O-beta-D-glucoside + H2O = quercetin + beta-D-glucose. The enzyme catalyses kaempferol 3-O-beta-D-glucoside + H2O = kaempferol + beta-D-glucose. The catalysed reaction is luteolin 7-O-beta-D-glucoside + H2O = luteolin + beta-D-glucose. It catalyses the reaction luteolin 4'-O-beta-D-glucoside + H2O = luteolin + beta-D-glucose. It carries out the reaction (2S)-naringenin 7-O-beta-D-glucoside + H2O = (2S)-naringenin + beta-D-glucose. The enzyme catalyses eriodictyol-7-O-beta-D-glucoside + H2O = (S)-eriodictyol + beta-D-glucose. The catalysed reaction is apigenin 7-O-beta-D-glucoside + H2O = apigenin + beta-D-glucose. It catalyses the reaction daidzein 7-O-beta-D-glucoside + H2O = daidzein + beta-D-glucose + H(+). It carries out the reaction genistein 7-O-beta-D-glucoside + H2O = genistein + beta-D-glucose. The enzyme catalyses a beta-D-galactosyl-N-acylsphingosine + H2O = a ceramide + beta-D-galactose.. The catalysed reaction is beta-D-glucosyl-(1&lt;-&gt;1')-N-hexadecanoylsphing-4-enine + H2O = N-hexadecanoylsphing-4-enine + beta-D-glucose. It catalyses the reaction beta-D-galactosyl-(1&lt;-&gt;1')-N-hexadecanoylsphing-4-enine + H2O = beta-D-galactose + N-hexadecanoylsphing-4-enine. It carries out the reaction beta-D-galactosyl-(1&lt;-&gt;1')-N-hexadecanoylsphinganine + H2O = N-hexadecanoylsphinganine + beta-D-galactose. The enzyme catalyses beta-D-glucosyl-(1&lt;-&gt;1')-N-hexadecanoylsphinganine + H2O = N-hexadecanoylsphinganine + beta-D-glucose. Its function is as follows. Broad specificity glycosidase of the intestinal brush border membrane that hydrolyzes lactose, the main sugar in mammalian milk, to produce D-glucose and D-galactose. The mature protein is composed of two domains that catalyze the hydrolysis of beta-glucopyranosides and beta-galactopyranosides, with a preference for hydrophilic aglycones (in lactose and cellobiose) for one domain and hydrophobic aglycones (in phlorizin and glycosylceramides) for the other. In Rattus norvegicus (Rat), this protein is Lactase/phlorizin hydrolase.